Consider the following 228-residue polypeptide: Ankyrin repeat domain-containing protein 46 (228 aa).

ANK repeat units lie at residues 11–40, 44–73, 77–103, and 107–138; these read QTNVPLLQACIDGDFNYSKRLLESGFDPNI, RGRTGLHLAAARGNVDICQLLHKFGADLLA, QGNTALHLCGHVDTIQFLVSNGLKIDI, and QGATPLVLAKRRGVNKDVIRLLESLEEQEVKG. A helical membrane pass occupies residues 195–215; sequence VLLLIFVIALLSLGIAYYVSG.

The protein localises to the membrane. The polypeptide is Ankyrin repeat domain-containing protein 46 (ANKRD46) (Bos taurus (Bovine)).